The sequence spans 548 residues: Terpene synthase 1 (548 aa).

Residues Asp-301, Asp-305, Asp-445, and Glu-453 each coordinate Mg(2+). The DDXXD motif signature appears at 301-305; sequence DDTYD.

It belongs to the terpene synthase family. Tpsa subfamily. Mg(2+) serves as cofactor. It depends on Mn(2+) as a cofactor.

It carries out the reaction (2E,6E)-farnesyl diphosphate = (+)-valencene + diphosphate. The protein operates within secondary metabolite biosynthesis; terpenoid biosynthesis. Sesquiterpene synthase involved in the biosynthesis of volatile compounds which contribute to fruit flavor and aroma. Mediates the conversion of (2E,6E)-farnesyl diphosphate (FPP) into (+)-valencene. No activity detected with geranyl diphosphate (GPP). The polypeptide is Terpene synthase 1 (Citrus sinensis (Sweet orange)).